A 325-amino-acid polypeptide reads, in one-letter code: MFLYLCFIFQRTCSEEMEEENATLLTEFVLTGFLHQPDCKIPLFLAFLVIYLITIMGNLGLIVLIWKDPHLHIPMYLFLGSLAFVDASLSSTVTPKMLINFLAKSKMISLSECMVQFFSLVTTVTTECFLLATMAYDRYVAICKALLYPVIMTNELCIQLLVLSFIGGLLHALIHEAFSFRLTFCNSNIIQHFYCDIIPLLKISCTDSSINFLMVFIFAGSVQVFTIGTILISYTIILFTILEKKSIKGIRKAVSTCGAHLLSVSLYYGPLTFKYLGSASPQADDQDMMESLFYTVIVPLLNPMIYSLRNKQVIASFTKMFKSNV.

At 1 to 41 (MFLYLCFIFQRTCSEEMEEENATLLTEFVLTGFLHQPDCKI) the chain is on the extracellular side. N-linked (GlcNAc...) asparagine glycosylation is present at asparagine 21. Residues 42–62 (PLFLAFLVIYLITIMGNLGLI) traverse the membrane as a helical segment. Residues 63–70 (VLIWKDPH) are Cytoplasmic-facing. The helical transmembrane segment at 71 to 91 (LHIPMYLFLGSLAFVDASLSS) threads the bilayer. Residues 92–115 (TVTPKMLINFLAKSKMISLSECMV) are Extracellular-facing. Residues cysteine 113 and cysteine 205 are joined by a disulfide bond. Residues 116-136 (QFFSLVTTVTTECFLLATMAY) form a helical membrane-spanning segment. Over 137 to 155 (DRYVAICKALLYPVIMTNE) the chain is Cytoplasmic. Residues 156–176 (LCIQLLVLSFIGGLLHALIHE) traverse the membrane as a helical segment. The Extracellular portion of the chain corresponds to 177 to 212 (AFSFRLTFCNSNIIQHFYCDIIPLLKISCTDSSINF). Residues 213–233 (LMVFIFAGSVQVFTIGTILIS) form a helical membrane-spanning segment. At 234 to 253 (YTIILFTILEKKSIKGIRKA) the chain is on the cytoplasmic side. The chain crosses the membrane as a helical span at residues 254-274 (VSTCGAHLLSVSLYYGPLTFK). At 275-287 (YLGSASPQADDQD) the chain is on the extracellular side. The chain crosses the membrane as a helical span at residues 288-308 (MMESLFYTVIVPLLNPMIYSL). The Cytoplasmic portion of the chain corresponds to 309-325 (RNKQVIASFTKMFKSNV).

The protein belongs to the G-protein coupled receptor 1 family.

The protein resides in the cell membrane. In terms of biological role, odorant receptor. This is Olfactory receptor 5H6 (OR5H6) from Homo sapiens (Human).